A 205-amino-acid chain; its full sequence is Probable calcium-binding protein CML41 (205 aa).

A disordered region spans residues 26–55 (SFQNRRRSPKSNSSSTLNSPRSNSDDNNNI). The span at 35–54 (KSNSSSTLNSPRSNSDDNNN) shows a compositional bias: low complexity. EF-hand domains are found at residues 60-95 (ASKEELRQVFSHFDSDGDGKISAFELRHYFGSVGEY), 96-131 (ISHEAAQEAINEVDTDADGSLGFEDFVGLMTRRDLY), 137-173 (DGDGELKTAFEMFEVEKGSGCITPKGLQKMLVKLGES), and 174-205 (RTYGECEAMIKFYDIDGNGILDFHEFRQMMTV). Ca(2+)-binding residues include Asp-73, Asp-75, Asp-77, Lys-79, Glu-84, Asp-109, Asp-111, Asp-113, Ser-115, and Asp-120. Asp-187, Asp-189, Asn-191, and Glu-198 together coordinate Ca(2+).

Its function is as follows. Potential calcium sensor. This Arabidopsis thaliana (Mouse-ear cress) protein is Probable calcium-binding protein CML41 (CML41).